A 56-amino-acid polypeptide reads, in one-letter code: Large ribosomal subunit protein bL33 (56 aa).

This sequence belongs to the bacterial ribosomal protein bL33 family.

In Tropheryma whipplei (strain TW08/27) (Whipple's bacillus), this protein is Large ribosomal subunit protein bL33.